The primary structure comprises 338 residues: DNA-directed RNA polymerase subunit alpha (338 aa).

Residues 1–233 form an alpha N-terminal domain (alpha-NTD) region; the sequence is MLREEVAVST…DLFIPFLHAE (233 aa). Residues 266–338 form an alpha C-terminal domain (alpha-CTD) region; the sequence is IALKFIFIDQ…IDLPKNKFSN (73 aa).

The protein belongs to the RNA polymerase alpha chain family. In terms of assembly, in plastids the minimal PEP RNA polymerase catalytic core is composed of four subunits: alpha, beta, beta', and beta''. When a (nuclear-encoded) sigma factor is associated with the core the holoenzyme is formed, which can initiate transcription.

It localises to the plastid. Its subcellular location is the chloroplast. The enzyme catalyses RNA(n) + a ribonucleoside 5'-triphosphate = RNA(n+1) + diphosphate. Its function is as follows. DNA-dependent RNA polymerase catalyzes the transcription of DNA into RNA using the four ribonucleoside triphosphates as substrates. In Nandina domestica (Heavenly bamboo), this protein is DNA-directed RNA polymerase subunit alpha.